The sequence spans 167 residues: Small ribosomal subunit protein uS5 (167 aa).

The 64-residue stretch at L11–V74 folds into the S5 DRBM domain.

Belongs to the universal ribosomal protein uS5 family. In terms of assembly, part of the 30S ribosomal subunit. Contacts proteins S4 and S8.

Functionally, with S4 and S12 plays an important role in translational accuracy. In terms of biological role, located at the back of the 30S subunit body where it stabilizes the conformation of the head with respect to the body. The protein is Small ribosomal subunit protein uS5 of Yersinia enterocolitica serotype O:8 / biotype 1B (strain NCTC 13174 / 8081).